Reading from the N-terminus, the 98-residue chain is uncharacterized protein (98 aa).

The protein localises to the cytoplasm. This is an uncharacterized protein from Saccharomyces cerevisiae (strain ATCC 204508 / S288c) (Baker's yeast).